A 426-amino-acid polypeptide reads, in one-letter code: Glutamyl-tRNA reductase (426 aa).

Substrate contacts are provided by residues 49–52 (TCNR), serine 110, 115–117 (EAQ), and glutamine 121. The active-site Nucleophile is the cysteine 50. 191–196 (GAGEMA) provides a ligand contact to NADP(+).

The protein belongs to the glutamyl-tRNA reductase family. Homodimer.

It carries out the reaction (S)-4-amino-5-oxopentanoate + tRNA(Glu) + NADP(+) = L-glutamyl-tRNA(Glu) + NADPH + H(+). Its pathway is porphyrin-containing compound metabolism; protoporphyrin-IX biosynthesis; 5-aminolevulinate from L-glutamyl-tRNA(Glu): step 1/2. Catalyzes the NADPH-dependent reduction of glutamyl-tRNA(Glu) to glutamate 1-semialdehyde (GSA). This chain is Glutamyl-tRNA reductase, found in Rhodopirellula baltica (strain DSM 10527 / NCIMB 13988 / SH1).